The following is a 215-amino-acid chain: Pyridoxine/pyridoxamine 5'-phosphate oxidase (215 aa).

Substrate-binding positions include Arg9–Tyr12 and Lys69. FMN is bound by residues Arg64–Lys69, Phe79–Thr80, Lys86, and Gln108. Tyr126, Arg130, and Ser134 together coordinate substrate. FMN-binding positions include Gln143 to Ser144 and Trp188. Substrate is bound at residue Arg194–His196. Arg198 is a binding site for FMN.

This sequence belongs to the pyridoxamine 5'-phosphate oxidase family. As to quaternary structure, homodimer. FMN is required as a cofactor.

The enzyme catalyses pyridoxamine 5'-phosphate + O2 + H2O = pyridoxal 5'-phosphate + H2O2 + NH4(+). The catalysed reaction is pyridoxine 5'-phosphate + O2 = pyridoxal 5'-phosphate + H2O2. It functions in the pathway cofactor metabolism; pyridoxal 5'-phosphate salvage; pyridoxal 5'-phosphate from pyridoxamine 5'-phosphate: step 1/1. It participates in cofactor metabolism; pyridoxal 5'-phosphate salvage; pyridoxal 5'-phosphate from pyridoxine 5'-phosphate: step 1/1. Its function is as follows. Catalyzes the oxidation of either pyridoxine 5'-phosphate (PNP) or pyridoxamine 5'-phosphate (PMP) into pyridoxal 5'-phosphate (PLP). The chain is Pyridoxine/pyridoxamine 5'-phosphate oxidase from Pseudomonas syringae pv. syringae (strain B728a).